The following is a 364-amino-acid chain: tRNA N6-adenosine threonylcarbamoyltransferase (364 aa).

2 residues coordinate Fe cation: histidine 115 and histidine 119. Residues 137–141, aspartate 170, glycine 183, and asparagine 288 contribute to the substrate site; that span reads LVSGG. A Fe cation-binding site is contributed by aspartate 316. A disordered region spans residues 341-364; the sequence is PRSRWPLDEKSAPLIGTGRRGTKA.

It belongs to the KAE1 / TsaD family. Requires Fe(2+) as cofactor.

It is found in the cytoplasm. The enzyme catalyses L-threonylcarbamoyladenylate + adenosine(37) in tRNA = N(6)-L-threonylcarbamoyladenosine(37) in tRNA + AMP + H(+). Its function is as follows. Required for the formation of a threonylcarbamoyl group on adenosine at position 37 (t(6)A37) in tRNAs that read codons beginning with adenine. Is involved in the transfer of the threonylcarbamoyl moiety of threonylcarbamoyl-AMP (TC-AMP) to the N6 group of A37, together with TsaE and TsaB. TsaD likely plays a direct catalytic role in this reaction. This is tRNA N6-adenosine threonylcarbamoyltransferase from Bartonella henselae (strain ATCC 49882 / DSM 28221 / CCUG 30454 / Houston 1) (Rochalimaea henselae).